The chain runs to 166 residues: 3-dehydroquinate dehydratase (166 aa).

Tyrosine 22 functions as the Proton acceptor in the catalytic mechanism. Positions 73, 79, and 86 each coordinate substrate. Histidine 99 serves as the catalytic Proton donor. Substrate contacts are provided by residues 100–101 and arginine 110; that span reads IT.

This sequence belongs to the type-II 3-dehydroquinase family. Homododecamer.

It carries out the reaction 3-dehydroquinate = 3-dehydroshikimate + H2O. The protein operates within metabolic intermediate biosynthesis; chorismate biosynthesis; chorismate from D-erythrose 4-phosphate and phosphoenolpyruvate: step 3/7. In terms of biological role, catalyzes a trans-dehydration via an enolate intermediate. The protein is 3-dehydroquinate dehydratase of Wolinella succinogenes (strain ATCC 29543 / DSM 1740 / CCUG 13145 / JCM 31913 / LMG 7466 / NCTC 11488 / FDC 602W) (Vibrio succinogenes).